A 685-amino-acid chain; its full sequence is MTDAKNNLLYFFDRPNEPCFMQKGEDKVVFEIPDHYYPDKYKSLSNTLSNRFGNEATKRIPIRNITLPNLEVPMQLPYNDQFSLFVPKHRTMAAKLIDIFMGMRDVEDLQSVCSYCQLRINPYMFNYCLSVAILHRPDTKGLSIPTFAETFPDKFMDSKVFLRAREVSNVVISGSRMPVNVPINYTANTTEPEQRVAYFREDIGINLHHWHWHLVYPFDSADRSIVNKDRRGELFYYMHQQIIGRYNVERMCNGLPQVKPFSDFSAPIEEGYFPKLDSQVASRTWPPRFAGSVFRNLDRTVDQVKIDVRKLFTWRDQFLEAIQKMAIKMPNGRELPLDEVTGIDMLGNLMESSIISPNRGYYGDLHNMGHVFAAYTHDPDHRHLEQFGVMGDSATAMRDPFFYRWHRFVDDVFNIYKEKLTPYTNERLDFPGVRVSSVGIEGARPNTLRTLWQQSTVELGRGLDFTPRGSVLARFTHLQHDEFQYVIEVNNTTGGNLMGTVRIFMAPKVDDNGQPMSFNKQRRLMIELDKFSQALRPGTNTIRRRSVDSSVTIPYERTFRNQSERPGDPGTAGAAEFDFCGCGWPHHMLIPKGTAQGYPVVLFVMISNWNNDRIEQDLVGSCNDAASYCGIRDRKYPDKQAMGYPFDRKMANDAATLSDFLRPNMAVRDCSIQFSDTTVERGQQG.

Histidine 209, histidine 213, and histidine 239 together coordinate Cu cation. Glutamate 351 functions as the Proton acceptor in the catalytic mechanism. Residues histidine 366, histidine 370, and histidine 406 each contribute to the Cu cation site. Intrachain disulfides connect cysteine 580–cysteine 622 and cysteine 582–cysteine 629.

As to quaternary structure, heterodimer. Forms a complex with an interleukin 1-like protein as a consequence of a host defense response. It depends on Cu(2+) as a cofactor. In terms of processing, the N-terminus is blocked. Synthesized by oenocytoids, a type of hemocyte, and released into the hemolymph plasma.

The protein resides in the secreted. The enzyme catalyses 2 L-dopa + O2 = 2 L-dopaquinone + 2 H2O. It carries out the reaction L-tyrosine + O2 = L-dopaquinone + H2O. Its activity is regulated as follows. Activated by immulectin and lipopolysaccharide. Its function is as follows. This is a copper-containing oxidase that functions in the formation of pigments such as melanins and other polyphenolic compounds. Catalyzes the rate-limiting conversions of tyrosine to DOPA, DOPA to DOPA-quinone and possibly 5,6 dihydroxyindole to indole-5'6 quinone. Binds to the surface of hemocytes and is involved in hemocyte melanization. The chain is Phenoloxidase subunit 1 from Manduca sexta (Tobacco hawkmoth).